We begin with the raw amino-acid sequence, 365 residues long: 5-hydroxytryptamine receptor 1E (365 aa).

Over 1–21 the chain is Extracellular; sequence MNITNCTTEASMAIRPKTITE. N-linked (GlcNAc...) asparagine glycosylation is found at Asn2 and Asn5. Residues 22 to 45 form a helical membrane-spanning segment; sequence KMLICMTLVVITTLTTLLNLAVIM. The Cytoplasmic portion of the chain corresponds to 46 to 59; it reads AIGTTKKLHQPANY. Residues 60–84 traverse the membrane as a helical segment; it reads LICSLAVTDLLVAVLVMPLSIIYIV. The Extracellular segment spans residues 85–92; sequence MDRWKLGY. A helical transmembrane segment spans residues 93–118; sequence FLCEVWLSVDMTCCTCSILHLCVIAL. Cysteines 95 and 173 form a disulfide. The serotonin site is built by Asp102 and Cys106. The short motif at 119 to 121 is the DRY motif; important for ligand-induced conformation changes element; it reads DRY. Residues 119-138 lie on the Cytoplasmic side of the membrane; sequence DRYWAITNAIEYARKRTAKR. Residues 139-157 traverse the membrane as a helical segment; sequence AALMILTVWTISIFISMPP. Residues 158–179 lie on the Extracellular side of the membrane; sequence LFWRSHRRLSPPPSQCTIQHDH. The chain crosses the membrane as a helical span at residues 180-203; sequence VIYTIYSTLGAFYIPLTLILILYY. The Cytoplasmic segment spans residues 204-291; the sequence is RIYHAAKSLY…SSTRERKAAR (88 aa). Residues 292 to 316 form a helical membrane-spanning segment; sequence ILGLILGAFILSWLPFFIKELIVGL. Residues 317 to 322 are Extracellular-facing; that stretch reads SIYTVS. A helical membrane pass occupies residues 323 to 345; that stretch reads SEVADFLTWLGYVNSLINPLLYT. Residues 340–344 carry the NPxxY motif; important for ligand-induced conformation changes and signaling motif; that stretch reads NPLLY. Residues 346 to 365 are Cytoplasmic-facing; that stretch reads SFNEDFKLAFKKLIRCREHT.

This sequence belongs to the G-protein coupled receptor 1 family. Detected in brain.

The protein resides in the cell membrane. Functionally, G-protein coupled receptor for 5-hydroxytryptamine (serotonin). Also functions as a receptor for various alkaloids and psychoactive substances. Ligand binding causes a conformation change that triggers signaling via guanine nucleotide-binding proteins (G proteins) and modulates the activity of downstream effectors, such as adenylate cyclase. HTR1E is coupled to G(i)/G(o) G alpha proteins and mediates inhibitory neurotransmission by inhibiting adenylate cyclase activity. In Homo sapiens (Human), this protein is 5-hydroxytryptamine receptor 1E.